We begin with the raw amino-acid sequence, 141 residues long: Nucleoside diphosphate kinase (141 aa).

The ATP site is built by Lys9, Phe57, Arg85, Thr91, Arg102, and Asn112. The active-site Pros-phosphohistidine intermediate is His115.

Belongs to the NDK family. Homotetramer. Mg(2+) serves as cofactor.

The protein resides in the cytoplasm. It catalyses the reaction a 2'-deoxyribonucleoside 5'-diphosphate + ATP = a 2'-deoxyribonucleoside 5'-triphosphate + ADP. It carries out the reaction a ribonucleoside 5'-diphosphate + ATP = a ribonucleoside 5'-triphosphate + ADP. Major role in the synthesis of nucleoside triphosphates other than ATP. The ATP gamma phosphate is transferred to the NDP beta phosphate via a ping-pong mechanism, using a phosphorylated active-site intermediate. This chain is Nucleoside diphosphate kinase, found in Chloroherpeton thalassium (strain ATCC 35110 / GB-78).